The sequence spans 1388 residues: CRISPR-associated endonuclease Cas9 2 (1388 aa).

Aspartate 10 functions as the For RuvC-like nuclease domain in the catalytic mechanism. Residues aspartate 10, glutamate 763, and glutamate 767 each contribute to the Mg(2+) site. An HNH Cas9-type domain is found at 771 to 928; the sequence is TNQGKSNSQQ…DKAGFIQRQL (158 aa). The active-site Proton acceptor for HNH nuclease domain is the histidine 847. Histidine 990 serves as a coordination point for Mg(2+). Residues 1100-1109 are compositionally biased toward basic and acidic residues; sequence EQNHGLDRGK. Residues 1100–1130 form a disordered region; that stretch reads EQNHGLDRGKPKGLFNANLSSKPKPNSNENL. The PAM-interacting domain (PI) stretch occupies residues 1102 to 1388; that stretch reads NHGLDRGKPK…RIDLAKLGEG (287 aa). Polar residues predominate over residues 1116–1129; it reads ANLSSKPKPNSNEN.

The protein belongs to the CRISPR-associated protein Cas9 family. Subtype II-A subfamily. As to quaternary structure, monomer. Binds crRNA and tracrRNA. Mg(2+) is required as a cofactor.

In terms of biological role, CRISPR (clustered regularly interspaced short palindromic repeat) is an adaptive immune system that provides protection against mobile genetic elements (viruses, transposable elements and conjugative plasmids). CRISPR clusters contain spacers, sequences complementary to antecedent mobile elements, and target invading nucleic acids. CRISPR clusters are transcribed and processed into CRISPR RNA (crRNA). In type II CRISPR systems correct processing of pre-crRNA requires a trans-encoded small RNA (tracrRNA), endogenous ribonuclease 3 (rnc) and this protein. The tracrRNA serves as a guide for ribonuclease 3-aided processing of pre-crRNA. Subsequently Cas9/crRNA/tracrRNA endonucleolytically cleaves linear or circular dsDNA target complementary to the spacer yielding blunt ends; Cas9 is inactive in the absence of the 2 guide RNAs (gRNA). Cas9 recognizes a 3'-G-rich protospacer adjacent motif (PAM, GGG in this organism) in the CRISPR repeat sequences to help distinguish self versus nonself, as targets within the bacterial CRISPR locus do not have PAMs. PAM recognition is also required for catalytic activity. Complements the gRNA coprocessing defect in a cas9 deletion in S.pyogenes strain 370, and cuts target DNA in Cas9:gRNAs mixing experiments with S.mutans strain UA159. The protein is CRISPR-associated endonuclease Cas9 2 of Streptococcus thermophilus (strain ATCC BAA-491 / LMD-9).